A 125-amino-acid chain; its full sequence is MNKTLILALSALLGLAACSAERVSLFPSYKLKIIQGNELEPRAVAALRPGMTKDQVLLLLGSPILRDAFHTDRWDYTFNTSRNGIIKERSNLTVYFENGVLVRTEGDVLQNAAEALKDRQNTDKP.

An N-terminal signal peptide occupies residues 1 to 17 (MNKTLILALSALLGLAA). Cys-18 carries N-palmitoyl cysteine lipidation. Cys-18 is lipidated: S-diacylglycerol cysteine.

This sequence belongs to the BamE family. As to quaternary structure, part of the Bam complex.

Its subcellular location is the cell outer membrane. Its function is as follows. Part of the outer membrane protein assembly complex, which is involved in assembly and insertion of beta-barrel proteins into the outer membrane. The protein is Outer membrane protein assembly factor BamE of Neisseria meningitidis serogroup B (strain ATCC BAA-335 / MC58).